The following is a 374-amino-acid chain: Anhydro-N-acetylmuramic acid kinase (374 aa).

12–19 (GTSLDGID) contributes to the ATP binding site.

This sequence belongs to the anhydro-N-acetylmuramic acid kinase family.

It carries out the reaction 1,6-anhydro-N-acetyl-beta-muramate + ATP + H2O = N-acetyl-D-muramate 6-phosphate + ADP + H(+). Its pathway is amino-sugar metabolism; 1,6-anhydro-N-acetylmuramate degradation. The protein operates within cell wall biogenesis; peptidoglycan recycling. Catalyzes the specific phosphorylation of 1,6-anhydro-N-acetylmuramic acid (anhMurNAc) with the simultaneous cleavage of the 1,6-anhydro ring, generating MurNAc-6-P. Is required for the utilization of anhMurNAc either imported from the medium or derived from its own cell wall murein, and thus plays a role in cell wall recycling. This chain is Anhydro-N-acetylmuramic acid kinase, found in Klebsiella pneumoniae subsp. pneumoniae (strain ATCC 700721 / MGH 78578).